A 433-amino-acid chain; its full sequence is Probable phosphoglucosamine mutase (433 aa).

Catalysis depends on serine 91, which acts as the Phosphoserine intermediate. Residues serine 91, aspartate 229, aspartate 231, and aspartate 233 each contribute to the Mg(2+) site. A Phosphoserine modification is found at serine 91.

This sequence belongs to the phosphohexose mutase family. Mg(2+) is required as a cofactor. In terms of processing, activated by phosphorylation.

It catalyses the reaction alpha-D-glucosamine 1-phosphate = D-glucosamine 6-phosphate. Its function is as follows. Catalyzes the conversion of glucosamine-6-phosphate to glucosamine-1-phosphate. The protein is Probable phosphoglucosamine mutase of Methanococcoides burtonii (strain DSM 6242 / NBRC 107633 / OCM 468 / ACE-M).